The chain runs to 373 residues: Polygalacturonase (373 aa).

The first 24 residues, 1–24 (MVRNIVSRLCSQLFALPSSSLQER), serve as a signal peptide directing secretion. Cysteines 27 and 42 form a disulfide. N-linked (GlcNAc...) asparagine glycans are attached at residues Asn-65 and Asn-94. PbH1 repeat units follow at residues 136-158 (TGNS…DITG), 159-197 (SSQL…DISS), 198-219 (SDHV…AVTS), 220-240 (GTNI…SIGS), 249-270 (VDGV…RIKS), 278-300 (INNV…DVQQ), 312-333 (TNGV…ASSA), and 345-369 (CSGF…YPTN). Asp-212 acts as the Proton donor in catalysis. An intrachain disulfide couples Cys-214 to Cys-230. His-234 is a catalytic residue. Asn-280 and Asn-290 each carry an N-linked (GlcNAc...) asparagine glycan. 2 cysteine pairs are disulfide-bonded: Cys-340–Cys-345 and Cys-364–Cys-371.

The protein belongs to the glycosyl hydrolase 28 family.

Its subcellular location is the secreted. It carries out the reaction (1,4-alpha-D-galacturonosyl)n+m + H2O = (1,4-alpha-D-galacturonosyl)n + (1,4-alpha-D-galacturonosyl)m.. Its function is as follows. Involved in maceration and soft-rotting of plant tissue. Hydrolyzes the 1,4-alpha glycosidic bonds of de-esterified pectate in the smooth region of the plant cell wall. The polypeptide is Polygalacturonase (PGA) (Fusarium fujikuroi (Bakanae and foot rot disease fungus)).